The chain runs to 417 residues: Multifunctional CCA protein (417 aa).

Positions 8 and 11 each coordinate ATP. Gly8 and Arg11 together coordinate CTP. Residues Asp21 and Asp23 each contribute to the Mg(2+) site. The ATP site is built by Arg91, Arg137, and Arg140. 3 residues coordinate CTP: Arg91, Arg137, and Arg140. Positions 225–326 (SGIHTLMTLQ…LNVLKKTDAF (102 aa)) constitute an HD domain.

This sequence belongs to the tRNA nucleotidyltransferase/poly(A) polymerase family. Bacterial CCA-adding enzyme type 1 subfamily. As to quaternary structure, monomer. Can also form homodimers and oligomers. Requires Mg(2+) as cofactor. Ni(2+) serves as cofactor.

The enzyme catalyses a tRNA precursor + 2 CTP + ATP = a tRNA with a 3' CCA end + 3 diphosphate. The catalysed reaction is a tRNA with a 3' CCA end + 2 CTP + ATP = a tRNA with a 3' CCACCA end + 3 diphosphate. Catalyzes the addition and repair of the essential 3'-terminal CCA sequence in tRNAs without using a nucleic acid template. Adds these three nucleotides in the order of C, C, and A to the tRNA nucleotide-73, using CTP and ATP as substrates and producing inorganic pyrophosphate. tRNA 3'-terminal CCA addition is required both for tRNA processing and repair. Also involved in tRNA surveillance by mediating tandem CCA addition to generate a CCACCA at the 3' terminus of unstable tRNAs. While stable tRNAs receive only 3'-terminal CCA, unstable tRNAs are marked with CCACCA and rapidly degraded. In Neisseria meningitidis serogroup C / serotype 2a (strain ATCC 700532 / DSM 15464 / FAM18), this protein is Multifunctional CCA protein.